The primary structure comprises 101 residues: Integration host factor subunit alpha (101 aa).

The tract at residues 49–70 is disordered; sequence FGNFQLRDKPQRPGRNPKTGEE.

This sequence belongs to the bacterial histone-like protein family. As to quaternary structure, heterodimer of an alpha and a beta chain.

Functionally, this protein is one of the two subunits of integration host factor, a specific DNA-binding protein that functions in genetic recombination as well as in transcriptional and translational control. This is Integration host factor subunit alpha from Nitrosospira multiformis (strain ATCC 25196 / NCIMB 11849 / C 71).